A 120-amino-acid chain; its full sequence is Large ribosomal subunit protein uL18 (120 aa).

This sequence belongs to the universal ribosomal protein uL18 family. In terms of assembly, part of the 50S ribosomal subunit; part of the 5S rRNA/L5/L18/L25 subcomplex. Contacts the 5S and 23S rRNAs.

Functionally, this is one of the proteins that bind and probably mediate the attachment of the 5S RNA into the large ribosomal subunit, where it forms part of the central protuberance. This Rhizobium etli (strain CIAT 652) protein is Large ribosomal subunit protein uL18.